The following is a 362-amino-acid chain: Outer mitochondrial transmembrane helix translocase (362 aa).

Over 1–19 (MVLKEIPTENITRPLGRNE) the chain is Mitochondrial intermembrane. Residues 20–42 (VIGLLFRLTIFGAVTYFTIKWMV) form a helical membrane-spanning segment. Residues 43–362 (DAIDPTRKQK…HEAFMQVPLD (320 aa)) are Cytoplasmic-facing. 137–144 (GPPGCGKT) is an ATP binding site.

This sequence belongs to the AAA ATPase family. MSP1 subfamily.

It is found in the mitochondrion outer membrane. The protein localises to the peroxisome membrane. The protein resides in the postsynaptic cell membrane. It carries out the reaction [protein]-with a C-terminal TM segment(out) + ATP + H2O = [protein]-with a C-terminal TM segment(in) + ADP + phosphate + H(+). Its function is as follows. Outer mitochondrial translocase required to remove mislocalized tail-anchored transmembrane proteins on mitochondria. Specifically recognizes and binds tail-anchored transmembrane proteins: acts as a dislocase that mediates the ATP-dependent extraction of mistargeted tail-anchored transmembrane proteins from the mitochondrion outer membrane. Also plays a critical role in regulating the surface expression of AMPA receptors (AMPAR), thereby regulating synaptic plasticity and learning and memory. This is Outer mitochondrial transmembrane helix translocase from Danio rerio (Zebrafish).